We begin with the raw amino-acid sequence, 324 residues long: Acetyl-coenzyme A carboxylase carboxyl transferase subunit alpha (324 aa).

Residues 37 to 291 enclose the CoA carboxyltransferase C-terminal domain; it reads KLERRLDKLK…RDFILREWLR (255 aa).

It belongs to the AccA family. As to quaternary structure, acetyl-CoA carboxylase is a heterohexamer composed of biotin carboxyl carrier protein (AccB), biotin carboxylase (AccC) and two subunits each of ACCase subunit alpha (AccA) and ACCase subunit beta (AccD).

It localises to the cytoplasm. The catalysed reaction is N(6)-carboxybiotinyl-L-lysyl-[protein] + acetyl-CoA = N(6)-biotinyl-L-lysyl-[protein] + malonyl-CoA. Its pathway is lipid metabolism; malonyl-CoA biosynthesis; malonyl-CoA from acetyl-CoA: step 1/1. Its function is as follows. Component of the acetyl coenzyme A carboxylase (ACC) complex. First, biotin carboxylase catalyzes the carboxylation of biotin on its carrier protein (BCCP) and then the CO(2) group is transferred by the carboxyltransferase to acetyl-CoA to form malonyl-CoA. This is Acetyl-coenzyme A carboxylase carboxyl transferase subunit alpha from Chlamydia abortus (strain DSM 27085 / S26/3) (Chlamydophila abortus).